The chain runs to 115 residues: Large ribosomal subunit protein bL19 (115 aa).

Belongs to the bacterial ribosomal protein bL19 family.

In terms of biological role, this protein is located at the 30S-50S ribosomal subunit interface and may play a role in the structure and function of the aminoacyl-tRNA binding site. The protein is Large ribosomal subunit protein bL19 of Kosmotoga olearia (strain ATCC BAA-1733 / DSM 21960 / TBF 19.5.1).